Here is a 96-residue protein sequence, read N- to C-terminus: Small ribosomal subunit protein bS6 (96 aa).

This sequence belongs to the bacterial ribosomal protein bS6 family.

Its function is as follows. Binds together with bS18 to 16S ribosomal RNA. This Synechococcus sp. (strain JA-2-3B'a(2-13)) (Cyanobacteria bacterium Yellowstone B-Prime) protein is Small ribosomal subunit protein bS6.